Reading from the N-terminus, the 404-residue chain is NADH-quinone oxidoreductase subunit D 2 (404 aa).

The protein belongs to the complex I 49 kDa subunit family. NDH-1 is composed of 14 different subunits. Subunits NuoB, C, D, E, F, and G constitute the peripheral sector of the complex.

The protein localises to the cell inner membrane. It carries out the reaction a quinone + NADH + 5 H(+)(in) = a quinol + NAD(+) + 4 H(+)(out). NDH-1 shuttles electrons from NADH, via FMN and iron-sulfur (Fe-S) centers, to quinones in the respiratory chain. The immediate electron acceptor for the enzyme in this species is believed to be ubiquinone. Couples the redox reaction to proton translocation (for every two electrons transferred, four hydrogen ions are translocated across the cytoplasmic membrane), and thus conserves the redox energy in a proton gradient. The protein is NADH-quinone oxidoreductase subunit D 2 of Rhizobium etli (strain CIAT 652).